We begin with the raw amino-acid sequence, 205 residues long: Protein-L-isoaspartate O-methyltransferase (205 aa).

Residue serine 52 is part of the active site.

It belongs to the methyltransferase superfamily. L-isoaspartyl/D-aspartyl protein methyltransferase family.

It localises to the cytoplasm. The enzyme catalyses [protein]-L-isoaspartate + S-adenosyl-L-methionine = [protein]-L-isoaspartate alpha-methyl ester + S-adenosyl-L-homocysteine. Its function is as follows. Catalyzes the methyl esterification of L-isoaspartyl residues in peptides and proteins that result from spontaneous decomposition of normal L-aspartyl and L-asparaginyl residues. It plays a role in the repair and/or degradation of damaged proteins. This is Protein-L-isoaspartate O-methyltransferase from Gloeobacter violaceus (strain ATCC 29082 / PCC 7421).